Reading from the N-terminus, the 361-residue chain is Chorismate synthase (361 aa).

The NADP(+) site is built by Arg48 and Arg54. Residues 125 to 127 (RSS), 238 to 239 (NA), Gly278, 293 to 297 (KPTSS), and Arg319 each bind FMN.

The protein belongs to the chorismate synthase family. Homotetramer. Requires FMNH2 as cofactor.

It catalyses the reaction 5-O-(1-carboxyvinyl)-3-phosphoshikimate = chorismate + phosphate. Its pathway is metabolic intermediate biosynthesis; chorismate biosynthesis; chorismate from D-erythrose 4-phosphate and phosphoenolpyruvate: step 7/7. Its function is as follows. Catalyzes the anti-1,4-elimination of the C-3 phosphate and the C-6 proR hydrogen from 5-enolpyruvylshikimate-3-phosphate (EPSP) to yield chorismate, which is the branch point compound that serves as the starting substrate for the three terminal pathways of aromatic amino acid biosynthesis. This reaction introduces a second double bond into the aromatic ring system. In Salmonella typhi, this protein is Chorismate synthase.